A 749-amino-acid polypeptide reads, in one-letter code: Protein lin-54 homolog (749 aa).

Lys-139 participates in a covalent cross-link: Glycyl lysine isopeptide (Lys-Gly) (interchain with G-Cter in SUMO2). Lys-244 and Lys-249 each carry N6-acetyllysine. 4 positions are modified to phosphoserine: Ser-264, Ser-282, Ser-310, and Ser-314. A Glycyl lysine isopeptide (Lys-Gly) (interchain with G-Cter in SUMO2) cross-link involves residue Lys-357. Residues 521–634 (PRKPCNCTKS…KCIGCKNFEE (114 aa)) form the CRC domain. The DNA-binding stretch occupies residues 523–536 (KPCNCTKSLCLKLY). 9 residues coordinate Zn(2+): Cys-525, Cys-527, Cys-532, Cys-537, Cys-539, Cys-546, Cys-549, Cys-551, and Cys-554. A linker region spans residues 583 to 596 (IGKGKEGESDRRHS). The Zn(2+) site is built by Cys-599, Cys-601, Cys-606, Cys-611, Cys-613, Cys-620, Cys-624, Cys-626, and Cys-629. Residues 599 to 612 (CNCKRSGCLKNYCE) are DNA-binding. Ser-635 is subject to Phosphoserine. Glycyl lysine isopeptide (Lys-Gly) (interchain with G-Cter in SUMO2) cross-links involve residues Lys-639, Lys-659, and Lys-661.

This sequence belongs to the lin-54 family. In terms of assembly, component of the DREAM complex (also named LINC complex) at least composed of E2F4, E2F5, LIN9, LIN37, LIN52, LIN54, MYBL1, MYBL2, RBL1, RBL2, RBBP4, RBL2, TFDP1 and TFDP2. The complex exists in quiescent cells where it represses cell cycle-dependent genes. It dissociates in S phase when LIN9, LIN37, LIN52 and LIN54 form a subcomplex that binds to MYBL2.

Its subcellular location is the nucleus. In terms of biological role, component of the DREAM complex, a multiprotein complex that can both act as a transcription activator or repressor depending on the context. In G0 phase, the complex binds to more than 800 promoters and is required for repression of E2F target genes. In S phase, the complex selectively binds to the promoters of G2/M genes whose products are required for mitosis and participates in their cell cycle dependent activation. In the complex, acts as a DNA-binding protein that binds the promoter of CDK1 in a sequence-specific manner. Specifically recognizes the consensus motif 5'-TTYRAA-3' in target DNA. The polypeptide is Protein lin-54 homolog (Lin54) (Rattus norvegicus (Rat)).